A 196-amino-acid polypeptide reads, in one-letter code: UPF0200 protein MK0400 (196 aa).

7–14 (GMPGAGKG) serves as a coordination point for ATP.

The protein belongs to the UPF0200 family.

The polypeptide is UPF0200 protein MK0400 (Methanopyrus kandleri (strain AV19 / DSM 6324 / JCM 9639 / NBRC 100938)).